Here is a 498-residue protein sequence, read N- to C-terminus: MKKYILAIDQGTTSSRAILFNHAGQIHGMTQQEYPQIFPAPGWVEHDANAIWHSQLAVAQQVLKEQHLSAADIAAIGITNQRETTVLWDRQTGEPIAHAIVWQDRRTAALCDQLRADGKAPLFQQKTGLVLDSYFSGTKLKWLLDHTPGARVRAERGELAFGTIDSWLIFKLSGNHVTDTSNASRTLLFNIHTKQWDDELLALLDIPHSLLPAIVPSSGIVGQTYTSLFGQSIPIAGIAGDQQAATFGQACHRPGMAKNTYGTGCFMLLNTGTQAIASHNNLLTTIGWTLGNDVDARTDYMLEGSVFMAGAIIQWLRDGLGIIQHSSDVEALATSVPDNGGVVFIPAFSGLGAPYWDPYARGTIVGMTRGSNKAHIARAALESIAYQTVDVLEAMQKDAQILLQELRVDGGAARNDLLMQFQADMLNVPVIRPVVTETTALGAAYLAGLAVAFWESKEEIATQWQMERRFEPRMTDDEHAQRLYTWHRAVQRAQAWNI.

An ADP-binding site is contributed by Thr-12. ATP-binding residues include Thr-12, Thr-13, and Ser-14. Thr-12 lines the sn-glycerol 3-phosphate pocket. Position 16 (Arg-16) interacts with ADP. 4 residues coordinate sn-glycerol 3-phosphate: Arg-82, Glu-83, Tyr-134, and Asp-241. 5 residues coordinate glycerol: Arg-82, Glu-83, Tyr-134, Asp-241, and Gln-242. ADP-binding residues include Thr-263 and Gly-310. The ATP site is built by Thr-263, Gly-310, Gln-314, and Gly-411. Positions 411 and 415 each coordinate ADP.

It belongs to the FGGY kinase family.

The catalysed reaction is glycerol + ATP = sn-glycerol 3-phosphate + ADP + H(+). It functions in the pathway polyol metabolism; glycerol degradation via glycerol kinase pathway; sn-glycerol 3-phosphate from glycerol: step 1/1. With respect to regulation, inhibited by fructose 1,6-bisphosphate (FBP). Its function is as follows. Key enzyme in the regulation of glycerol uptake and metabolism. Catalyzes the phosphorylation of glycerol to yield sn-glycerol 3-phosphate. The protein is Glycerol kinase of Herminiimonas arsenicoxydans.